Reading from the N-terminus, the 1274-residue chain is Regulator of telomere elongation helicase 1 (1274 aa).

The Helicase ATP-binding domain occupies 7–296; sequence NGVTVDFPFQ…ARVAQHGELQ (290 aa). Residue 42-49 coordinates ATP; the sequence is SPTGTGKT. Cys-145, Cys-163, Cys-172, and Cys-207 together coordinate [4Fe-4S] cluster. The Nuclear localization signal motif lies at 151 to 167; sequence KKQESNHMQISLCRKKV. The DEAH box motif lies at 250–253; it reads DEAH. The short motif at 871–877 is the Nuclear localization signal element; sequence QRGGKKK. Disordered stretches follow at residues 982-1002, 1014-1038, and 1143-1198; these read NSLP…RREL, RQLD…SKGD, and ELPC…DDTI. The span at 1186-1196 shows a compositional bias: basic and acidic residues; that stretch reads QRPDQSARSDD.

This sequence belongs to the helicase family. RAD3/XPD subfamily. In terms of assembly, interacts with TERF1. Interacts (via PIP-box) with PCNA; the interaction is direct and essential for suppressing telomere fragility. Interacts with MMS19; the interaction mediates the association of RTEL1 with the cytosolic iron-sulfur protein assembly (CIA) complex.

Its subcellular location is the nucleus. It carries out the reaction ATP + H2O = ADP + phosphate + H(+). In terms of biological role, a probable ATP-dependent DNA helicase implicated in telomere-length regulation, DNA repair and the maintenance of genomic stability. Acts as an anti-recombinase to counteract toxic recombination and limit crossover during meiosis. Regulates meiotic recombination and crossover homeostasis by physically dissociating strand invasion events and thereby promotes noncrossover repair by meiotic synthesis dependent strand annealing (SDSA) as well as disassembly of D loop recombination intermediates. Also disassembles T loops and prevents telomere fragility by counteracting telomeric G4-DNA structures, which together ensure the dynamics and stability of the telomere. This Rattus norvegicus (Rat) protein is Regulator of telomere elongation helicase 1 (Rtel1).